The primary structure comprises 99 residues: MAKSGIAAGVNKGRKTTAKEVAPKISYRKGASSQRTVFVRSIVKEVAGLAPYERRLIELIRNAGEKRAKKLAKKRLGTHKRALRKVEEMTQVIAESRRH.

It belongs to the eukaryotic ribosomal protein eL36 family. Component of the large ribosomal subunit. Mature ribosomes consist of a small (40S) and a large (60S) subunit. The 40S subunit contains about 32 different proteins and 1 molecule of RNA (18S). The 60S subunit contains 45 different proteins and 3 molecules of RNA (25S, 5.8S and 5S).

Its subcellular location is the cytoplasm. Component of the ribosome, a large ribonucleoprotein complex responsible for the synthesis of proteins in the cell. The small ribosomal subunit (SSU) binds messenger RNAs (mRNAs) and translates the encoded message by selecting cognate aminoacyl-transfer RNA (tRNA) molecules. The large subunit (LSU) contains the ribosomal catalytic site termed the peptidyl transferase center (PTC), which catalyzes the formation of peptide bonds, thereby polymerizing the amino acids delivered by tRNAs into a polypeptide chain. The nascent polypeptides leave the ribosome through a tunnel in the LSU and interact with protein factors that function in enzymatic processing, targeting, and the membrane insertion of nascent chains at the exit of the ribosomal tunnel. This Candida albicans (strain SC5314 / ATCC MYA-2876) (Yeast) protein is Large ribosomal subunit protein eL36.